Here is a 32-residue protein sequence, read N- to C-terminus: Parigidin-br1 (32 aa).

A cross-link (cyclopeptide (Gly-Asp)) is located at residues 1–32; it reads GGSVPCGESCVFIPCITSLAGCSCKNKVCYYD. Intrachain disulfides connect C6–C22, C10–C24, and C15–C29.

In terms of processing, this is a cyclic peptide. In terms of tissue distribution, expressed in leaves, flowers, peduncles and seeds (at protein level).

Probably participates in a plant defense mechanism. Reduces growth of and increases mortality in larvae of D.saccharalis. Kills cultured SF-9 cells of S.frugiperda probably by disrupting plasma membranes. Has hemolytic activity against human erythrocytes. Has no antibacterial activity against E.coli strain ATCC 8739 and S.aureus strain ATCC 25923. The protein is Parigidin-br1 of Palicourea rigida.